The chain runs to 79 residues: ATP synthase subunit c (79 aa).

A run of 2 helical transmembrane segments spans residues I11 to L31 and F53 to Y73.

The protein belongs to the ATPase C chain family. In terms of assembly, F-type ATPases have 2 components, F(1) - the catalytic core - and F(0) - the membrane proton channel. F(1) has five subunits: alpha(3), beta(3), gamma(1), delta(1), epsilon(1). F(0) has three main subunits: a(1), b(2) and c(10-14). The alpha and beta chains form an alternating ring which encloses part of the gamma chain. F(1) is attached to F(0) by a central stalk formed by the gamma and epsilon chains, while a peripheral stalk is formed by the delta and b chains.

It is found in the cell inner membrane. F(1)F(0) ATP synthase produces ATP from ADP in the presence of a proton or sodium gradient. F-type ATPases consist of two structural domains, F(1) containing the extramembraneous catalytic core and F(0) containing the membrane proton channel, linked together by a central stalk and a peripheral stalk. During catalysis, ATP synthesis in the catalytic domain of F(1) is coupled via a rotary mechanism of the central stalk subunits to proton translocation. In terms of biological role, key component of the F(0) channel; it plays a direct role in translocation across the membrane. A homomeric c-ring of between 10-14 subunits forms the central stalk rotor element with the F(1) delta and epsilon subunits. The chain is ATP synthase subunit c from Blochmanniella floridana.